We begin with the raw amino-acid sequence, 349 residues long: NADH-quinone oxidoreductase subunit H (349 aa).

Helical transmembrane passes span 20 to 42 (WTLI…LTYF), 88 to 108 (GIFI…WAVV), 123 to 143 (LLYI…SGWA), 167 to 187 (MGFS…VEIV), 202 to 222 (FLSW…ISGV), 249 to 269 (GMAF…VSAL), 284 to 304 (FLPD…FLFL), and 325 to 345 (VFVP…MSPL).

The protein belongs to the complex I subunit 1 family. As to quaternary structure, NDH-1 is composed of 14 different subunits. Subunits NuoA, H, J, K, L, M, N constitute the membrane sector of the complex.

It is found in the cell inner membrane. It carries out the reaction a quinone + NADH + 5 H(+)(in) = a quinol + NAD(+) + 4 H(+)(out). Its function is as follows. NDH-1 shuttles electrons from NADH, via FMN and iron-sulfur (Fe-S) centers, to quinones in the respiratory chain. The immediate electron acceptor for the enzyme in this species is believed to be ubiquinone. Couples the redox reaction to proton translocation (for every two electrons transferred, four hydrogen ions are translocated across the cytoplasmic membrane), and thus conserves the redox energy in a proton gradient. This subunit may bind ubiquinone. The protein is NADH-quinone oxidoreductase subunit H of Dechloromonas aromatica (strain RCB).